Consider the following 195-residue polypeptide: ATP-dependent Clp protease proteolytic subunit 3 (195 aa).

Ser-97 (nucleophile) is an active-site residue. Residue His-122 is part of the active site.

The protein belongs to the peptidase S14 family. As to quaternary structure, fourteen ClpP subunits assemble into 2 heptameric rings which stack back to back to give a disk-like structure with a central cavity, resembling the structure of eukaryotic proteasomes.

It localises to the cytoplasm. The catalysed reaction is Hydrolysis of proteins to small peptides in the presence of ATP and magnesium. alpha-casein is the usual test substrate. In the absence of ATP, only oligopeptides shorter than five residues are hydrolyzed (such as succinyl-Leu-Tyr-|-NHMec, and Leu-Tyr-Leu-|-Tyr-Trp, in which cleavage of the -Tyr-|-Leu- and -Tyr-|-Trp bonds also occurs).. Cleaves peptides in various proteins in a process that requires ATP hydrolysis. Has a chymotrypsin-like activity. Plays a major role in the degradation of misfolded proteins. The protein is ATP-dependent Clp protease proteolytic subunit 3 of Rhizobium meliloti (strain 1021) (Ensifer meliloti).